The primary structure comprises 163 residues: Ribonuclease H (163 aa).

The RNase H type-1 domain occupies 4 to 146 (SPKKVLIYTD…CDRLAVRASQ (143 aa)). The Mg(2+) site is built by aspartate 13, glutamate 51, aspartate 73, and aspartate 138.

Belongs to the RNase H family. Monomer. The cofactor is Mg(2+).

It localises to the cytoplasm. It carries out the reaction Endonucleolytic cleavage to 5'-phosphomonoester.. In terms of biological role, endonuclease that specifically degrades the RNA of RNA-DNA hybrids. This chain is Ribonuclease H, found in Rippkaea orientalis (strain PCC 8801 / RF-1) (Cyanothece sp. (strain PCC 8801)).